The primary structure comprises 176 residues: N-alpha-acetyltransferase 30 (176 aa).

Residues 3–159 (IVYKPLDIRN…DAFKLILPLT (157 aa)) form the N-acetyltransferase domain.

It belongs to the acetyltransferase family. MAK3 subfamily. In terms of assembly, component of the N-terminal acetyltransferase C (NatC) complex, which is composed of MAK3, MAK10 and MAK31.

It localises to the cytoplasm. It is found in the nucleus. The enzyme catalyses N-terminal L-methionyl-L-leucyl-[protein] + acetyl-CoA = N-terminal N(alpha)-acetyl-L-methionyl-L-leucyl-[protein] + CoA + H(+). It catalyses the reaction N-terminal L-methionyl-L-isoleucyl-[protein] + acetyl-CoA = N-terminal N(alpha)-acetyl-L-methionyl-L-isoleucyl-[protein] + CoA + H(+). The catalysed reaction is N-terminal L-methionyl-L-phenylalanyl-[protein] + acetyl-CoA = N-terminal N(alpha)-acetyl-L-methionyl-L-phenylalanyl-[protein] + CoA + H(+). It carries out the reaction N-terminal L-methionyl-L-tryptophyl-[protein] + acetyl-CoA = N-terminal N(alpha)-acetyl-L-methionyl-L-tryptophyl-[protein] + CoA + H(+). The enzyme catalyses N-terminal L-methionyl-L-tyrosyl-[protein] + acetyl-CoA = N-terminal N(alpha)-acetyl-L-methionyl-L-tyrosyl-[protein] + CoA + H(+). In terms of biological role, catalytic component of the NatC N-terminal acetyltransferase, which catalyzes acetylation of the N-terminus Met of L-A virus GAG protein and possibly GRH1. In Saccharomyces cerevisiae (strain ATCC 204508 / S288c) (Baker's yeast), this protein is N-alpha-acetyltransferase 30 (MAK3).